The following is a 79-amino-acid chain: Acyl carrier protein (79 aa).

The region spanning 1–76 is the Carrier domain; sequence MSLEDDVIAI…DVFTYIKKRQ (76 aa). At Ser-36 the chain carries O-(pantetheine 4'-phosphoryl)serine.

This sequence belongs to the acyl carrier protein (ACP) family. 4'-phosphopantetheine is transferred from CoA to a specific serine of apo-ACP by AcpS. This modification is essential for activity because fatty acids are bound in thioester linkage to the sulfhydryl of the prosthetic group.

Its subcellular location is the cytoplasm. The protein operates within lipid metabolism; fatty acid biosynthesis. Functionally, carrier of the growing fatty acid chain in fatty acid biosynthesis. This chain is Acyl carrier protein, found in Chlamydia pneumoniae (Chlamydophila pneumoniae).